Here is a 251-residue protein sequence, read N- to C-terminus: Probable transcriptional regulatory protein DehaBAV1_0421 (251 aa).

This sequence belongs to the TACO1 family.

The protein resides in the cytoplasm. The chain is Probable transcriptional regulatory protein DehaBAV1_0421 from Dehalococcoides mccartyi (strain ATCC BAA-2100 / JCM 16839 / KCTC 5957 / BAV1).